Consider the following 394-residue polypeptide: Exodeoxyribonuclease 7 large subunit (394 aa).

This sequence belongs to the XseA family. Heterooligomer composed of large and small subunits.

Its subcellular location is the cytoplasm. It catalyses the reaction Exonucleolytic cleavage in either 5'- to 3'- or 3'- to 5'-direction to yield nucleoside 5'-phosphates.. Bidirectionally degrades single-stranded DNA into large acid-insoluble oligonucleotides, which are then degraded further into small acid-soluble oligonucleotides. In Thermotoga petrophila (strain ATCC BAA-488 / DSM 13995 / JCM 10881 / RKU-1), this protein is Exodeoxyribonuclease 7 large subunit.